Reading from the N-terminus, the 322-residue chain is Sideroflexin fsf1 (322 aa).

Helical transmembrane passes span 143–163 (SYIY…KIVP), 175–195 (VLGR…NVFL), 229–249 (TALS…LVLM), and 269–289 (LGLI…VFPA).

The protein belongs to the sideroflexin family.

The protein resides in the mitochondrion membrane. Mitochondrial amino-acid transporter that mediates transport of serine into mitochondria. The sequence is that of Sideroflexin fsf1 from Schizosaccharomyces pombe (strain 972 / ATCC 24843) (Fission yeast).